A 461-amino-acid chain; its full sequence is Serine--tRNA ligase (461 aa).

The tract at residues 112–134 (EVPFGRDENDNREHHTFGEKPRF) is disordered. The segment covering 114–134 (PFGRDENDNREHHTFGEKPRF) has biased composition (basic and acidic residues). L-serine is bound at residue 252–254 (TAE). Position 283 to 285 (283 to 285 (RAE)) interacts with ATP. Glu306 is a binding site for L-serine. 370–373 (EISS) is a binding site for ATP. Ser406 contacts L-serine.

The protein belongs to the class-II aminoacyl-tRNA synthetase family. Type-1 seryl-tRNA synthetase subfamily. Homodimer. The tRNA molecule binds across the dimer.

It localises to the cytoplasm. It carries out the reaction tRNA(Ser) + L-serine + ATP = L-seryl-tRNA(Ser) + AMP + diphosphate + H(+). It catalyses the reaction tRNA(Sec) + L-serine + ATP = L-seryl-tRNA(Sec) + AMP + diphosphate + H(+). The protein operates within aminoacyl-tRNA biosynthesis; selenocysteinyl-tRNA(Sec) biosynthesis; L-seryl-tRNA(Sec) from L-serine and tRNA(Sec): step 1/1. Catalyzes the attachment of serine to tRNA(Ser). Is also able to aminoacylate tRNA(Sec) with serine, to form the misacylated tRNA L-seryl-tRNA(Sec), which will be further converted into selenocysteinyl-tRNA(Sec). This Methylocella silvestris (strain DSM 15510 / CIP 108128 / LMG 27833 / NCIMB 13906 / BL2) protein is Serine--tRNA ligase.